We begin with the raw amino-acid sequence, 101 residues long: NAD(P)H-quinone oxidoreductase subunit 4L, chloroplastic (101 aa).

The next 3 helical transmembrane spans lie at 2 to 22 (MLEHIPVLSAYLFSIDIYGLI), 32 to 52 (MCLELILNAVNINFVTFSDFF), and 61 to 81 (IFSIFVIAIAAAEAAIGSAIV).

This sequence belongs to the complex I subunit 4L family. In terms of assembly, NDH is composed of at least 16 different subunits, 5 of which are encoded in the nucleus.

The protein localises to the plastid. The protein resides in the chloroplast thylakoid membrane. The enzyme catalyses a plastoquinone + NADH + (n+1) H(+)(in) = a plastoquinol + NAD(+) + n H(+)(out). The catalysed reaction is a plastoquinone + NADPH + (n+1) H(+)(in) = a plastoquinol + NADP(+) + n H(+)(out). Its function is as follows. NDH shuttles electrons from NAD(P)H:plastoquinone, via FMN and iron-sulfur (Fe-S) centers, to quinones in the photosynthetic chain and possibly in a chloroplast respiratory chain. The immediate electron acceptor for the enzyme in this species is believed to be plastoquinone. Couples the redox reaction to proton translocation, and thus conserves the redox energy in a proton gradient. In Gossypium barbadense (Sea Island cotton), this protein is NAD(P)H-quinone oxidoreductase subunit 4L, chloroplastic.